A 201-amino-acid polypeptide reads, in one-letter code: Dephospho-CoA kinase (201 aa).

A DPCK domain is found at 4 to 201 (SVGLTGNIAS…KYLREAKIKQ (198 aa)). 12–17 (ASGKST) contributes to the ATP binding site.

Belongs to the CoaE family.

The protein localises to the cytoplasm. It carries out the reaction 3'-dephospho-CoA + ATP = ADP + CoA + H(+). It participates in cofactor biosynthesis; coenzyme A biosynthesis; CoA from (R)-pantothenate: step 5/5. Its function is as follows. Catalyzes the phosphorylation of the 3'-hydroxyl group of dephosphocoenzyme A to form coenzyme A. This chain is Dephospho-CoA kinase, found in Legionella pneumophila subsp. pneumophila (strain Philadelphia 1 / ATCC 33152 / DSM 7513).